The chain runs to 271 residues: Metal-staphylopine import system ATP-binding protein CntD (271 aa).

Residues 6-251 (VKHLTITDTW…PEHVYTKYLL (246 aa)) form the ABC transporter domain. 38–45 (GESGSGKS) provides a ligand contact to ATP.

The protein belongs to the ABC transporter superfamily. The complex is composed of two ATP-binding proteins (CntD and CntF), two transmembrane proteins (CntB and CntC) and a solute-binding protein (CntA).

The protein resides in the cell membrane. Its function is as follows. Part of the ABC transporter complex CntABCDF (Opp1) involved in the uptake of metal in complex with the metallophore staphylopine (StP). May be involved in the import of a large array of divalent metals ions such as nickel, cobalt, zinc, copper and iron. Probably responsible for energy coupling to the transport system. This is Metal-staphylopine import system ATP-binding protein CntD from Staphylococcus aureus (strain Mu50 / ATCC 700699).